Reading from the N-terminus, the 208-residue chain is ATP phosphoribosyltransferase (208 aa).

It belongs to the ATP phosphoribosyltransferase family. Short subfamily. Heteromultimer composed of HisG and HisZ subunits.

The protein resides in the cytoplasm. The catalysed reaction is 1-(5-phospho-beta-D-ribosyl)-ATP + diphosphate = 5-phospho-alpha-D-ribose 1-diphosphate + ATP. The protein operates within amino-acid biosynthesis; L-histidine biosynthesis; L-histidine from 5-phospho-alpha-D-ribose 1-diphosphate: step 1/9. In terms of biological role, catalyzes the condensation of ATP and 5-phosphoribose 1-diphosphate to form N'-(5'-phosphoribosyl)-ATP (PR-ATP). Has a crucial role in the pathway because the rate of histidine biosynthesis seems to be controlled primarily by regulation of HisG enzymatic activity. This is ATP phosphoribosyltransferase (hisG) from Thermotoga maritima (strain ATCC 43589 / DSM 3109 / JCM 10099 / NBRC 100826 / MSB8).